Consider the following 219-residue polypeptide: 7-cyano-7-deazaguanine synthase (219 aa).

Residue 10–20 (FSGGQDSTTCL) coordinates ATP. Residues Cys188, Cys197, Cys200, and Cys203 each coordinate Zn(2+).

Belongs to the QueC family. In terms of assembly, homodimer. The cofactor is Zn(2+).

The enzyme catalyses 7-carboxy-7-deazaguanine + NH4(+) + ATP = 7-cyano-7-deazaguanine + ADP + phosphate + H2O + H(+). It participates in purine metabolism; 7-cyano-7-deazaguanine biosynthesis. Its function is as follows. Catalyzes the ATP-dependent conversion of 7-carboxy-7-deazaguanine (CDG) to 7-cyano-7-deazaguanine (preQ(0)). The chain is 7-cyano-7-deazaguanine synthase from Clostridium botulinum (strain Langeland / NCTC 10281 / Type F).